Here is a 620-residue protein sequence, read N- to C-terminus: Sodium-dependent dopamine transporter (620 aa).

Residues Met1 to Glu56 are Cytoplasmic-facing. A discontinuously helical transmembrane segment spans residues Ala57 to Gly95. Na(+)-binding residues include Gly75, Ala77, Val78, Asp79, and Asn82. Residue Asp79 coordinates dopamine. Transmembrane regions (helical) follow at residues Gly96 to Gly127 and Ala128 to Phe171. Ser149 and Gly153 together coordinate dopamine. The Extracellular portion of the chain corresponds to Thr172–Pro236. Cys180 and Cys189 form a disulfide bridge. N-linked (GlcNAc...) asparagine glycans are attached at residues Asn181, Asn188, and Asn205. 2 consecutive transmembrane segments (helical) span residues Arg237–Trp256 and Lys257–Leu287. Residues Pro288–Cys306 lie on the Extracellular side of the membrane. The discontinuously helical transmembrane segment at Glu307 to Tyr335 threads the bilayer. Gln317 lines the chloride pocket. Phe320 contacts dopamine. Positions 321 and 353 each coordinate Na(+). Residue Ser321 coordinates chloride. The helical transmembrane segment at Asn336 to Ser376 threads the bilayer. Ser357 is a chloride binding site. The Extracellular portion of the chain corresponds to Val377–Thr400. The next 3 membrane-spanning stretches (helical) occupy residues Leu401 to His442, Arg443 to Asn466, and Gly467 to Tyr499. Residues Leu418, Asp421, and Ser422 each contribute to the Na(+) site. Dopamine contacts are provided by Ser422 and Ala423. The Cytoplasmic portion of the chain corresponds to Gly500–Pro516. A helical membrane pass occupies residues Ser517–Thr542. Over Phe543–Phe553 the chain is Extracellular. The helical transmembrane segment at Pro554–Leu583 threads the bilayer. Residues Gly561–Lys590 form an interaction with TGFB1I1 region. The Cytoplasmic segment spans residues Pro584–Val620.

The protein belongs to the sodium:neurotransmitter symporter (SNF) (TC 2.A.22) family. SLC6A3 subfamily. As to quaternary structure, monomer. Homooligomer; disulfide-linked. Interacts with PRKCABP and TGFB1I1. Interacts (via N-terminus) with SYNGR3 (via N-terminus). Interacts with SLC18A2. Interacts with TOR1A (ATP-bound); TOR1A regulates SLC6A3 subcellular location. Interacts with alpha-synuclein/SNCA. Interacts with SEPTIN4.

It is found in the cell membrane. The protein localises to the cell projection. It localises to the neuron projection. The protein resides in the axon. The enzyme catalyses dopamine(out) + chloride(out) + Na(+)(out) = dopamine(in) + chloride(in) + Na(+)(in). The catalysed reaction is (R)-noradrenaline(out) + chloride(out) + Na(+)(out) = (R)-noradrenaline(in) + chloride(in) + Na(+)(in). It carries out the reaction dopamine(out) + chloride(out) + 2 Na(+)(out) = dopamine(in) + chloride(in) + 2 Na(+)(in). Its activity is regulated as follows. Inhibited by zinc ions. Its function is as follows. Mediates sodium- and chloride-dependent transport of dopamine. Also mediates sodium- and chloride-dependent transport of norepinephrine (also known as noradrenaline). Regulator of light-dependent retinal hyaloid vessel regression, downstream of OPN5 signaling. The protein is Sodium-dependent dopamine transporter (SLC6A3) of Macaca fascicularis (Crab-eating macaque).